Reading from the N-terminus, the 118-residue chain is uncharacterized protein (118 aa).

The protein to M.jannaschii MJ0310 and MJ1340.

This is an uncharacterized protein from Methanocaldococcus jannaschii (strain ATCC 43067 / DSM 2661 / JAL-1 / JCM 10045 / NBRC 100440) (Methanococcus jannaschii).